The following is a 439-amino-acid chain: uncharacterized protein (439 aa).

The first 22 residues, M1 to A22, serve as a signal peptide directing secretion. The N-palmitoyl cysteine moiety is linked to residue C23. A lipid anchor (S-diacylglycerol cysteine) is attached at C23.

The protein belongs to the MG067/MG068/MG395 family.

The protein localises to the cell membrane. This is an uncharacterized protein from Mycoplasma pneumoniae (strain ATCC 29342 / M129 / Subtype 1) (Mycoplasmoides pneumoniae).